Reading from the N-terminus, the 485-residue chain is Ribulose bisphosphate carboxylase large chain (485 aa).

Residues 1 to 2 constitute a propeptide that is removed on maturation; sequence MS. The residue at position 3 (proline 3) is an N-acetylproline. Position 14 is an N6,N6,N6-trimethyllysine (lysine 14). Substrate-binding residues include asparagine 123 and threonine 173. Catalysis depends on lysine 175, which acts as the Proton acceptor. Lysine 177 lines the substrate pocket. Mg(2+)-binding residues include lysine 201, aspartate 203, and glutamate 204. At lysine 201 the chain carries N6-carboxylysine. The Proton acceptor role is filled by histidine 294. Residues arginine 295, histidine 327, and serine 379 each coordinate substrate.

Belongs to the RuBisCO large chain family. Type I subfamily. Heterohexadecamer of 8 large chains and 8 small chains; disulfide-linked. The disulfide link is formed within the large subunit homodimers. Mg(2+) is required as a cofactor. In terms of processing, the disulfide bond which can form in the large chain dimeric partners within the hexadecamer appears to be associated with oxidative stress and protein turnover.

The protein localises to the plastid. It is found in the chloroplast. It carries out the reaction 2 (2R)-3-phosphoglycerate + 2 H(+) = D-ribulose 1,5-bisphosphate + CO2 + H2O. The catalysed reaction is D-ribulose 1,5-bisphosphate + O2 = 2-phosphoglycolate + (2R)-3-phosphoglycerate + 2 H(+). In terms of biological role, ruBisCO catalyzes two reactions: the carboxylation of D-ribulose 1,5-bisphosphate, the primary event in carbon dioxide fixation, as well as the oxidative fragmentation of the pentose substrate in the photorespiration process. Both reactions occur simultaneously and in competition at the same active site. This Flaveria bidentis (Coastal plain yellowtops) protein is Ribulose bisphosphate carboxylase large chain.